The primary structure comprises 212 residues: Ribonuclease HII (212 aa).

The 203-residue stretch at 4-206 (EVQCGIDEAG…YKKIKEDVES (203 aa)) folds into the RNase H type-2 domain. A divalent metal cation is bound by residues D10, E11, and D103.

The protein belongs to the RNase HII family. Mn(2+) is required as a cofactor. Mg(2+) serves as cofactor.

The protein resides in the cytoplasm. The enzyme catalyses Endonucleolytic cleavage to 5'-phosphomonoester.. In terms of biological role, endonuclease that specifically degrades the RNA of RNA-DNA hybrids. This is Ribonuclease HII from Thermoplasma volcanium (strain ATCC 51530 / DSM 4299 / JCM 9571 / NBRC 15438 / GSS1).